The chain runs to 376 residues: Chaperone protein DnaJ (376 aa).

The region spanning 5-70 is the J domain; sequence DYYEVLGVAK…QKRAAYDQYG (66 aa). The CR-type zinc-finger motif lies at 136–214; that stretch reads GYDTQIRVPS…CHGSGKVKET (79 aa). 8 residues coordinate Zn(2+): cysteine 149, cysteine 152, cysteine 166, cysteine 169, cysteine 188, cysteine 191, cysteine 202, and cysteine 205. CXXCXGXG motif repeat units follow at residues 149–156, 166–173, 188–195, and 202–209; these read CEVCHGSG, CPTCHGQG, CPKCHGTG, and CAHCHGSG.

It belongs to the DnaJ family. As to quaternary structure, homodimer. Zn(2+) is required as a cofactor.

Its subcellular location is the cytoplasm. Participates actively in the response to hyperosmotic and heat shock by preventing the aggregation of stress-denatured proteins and by disaggregating proteins, also in an autonomous, DnaK-independent fashion. Unfolded proteins bind initially to DnaJ; upon interaction with the DnaJ-bound protein, DnaK hydrolyzes its bound ATP, resulting in the formation of a stable complex. GrpE releases ADP from DnaK; ATP binding to DnaK triggers the release of the substrate protein, thus completing the reaction cycle. Several rounds of ATP-dependent interactions between DnaJ, DnaK and GrpE are required for fully efficient folding. Also involved, together with DnaK and GrpE, in the DNA replication of plasmids through activation of initiation proteins. This chain is Chaperone protein DnaJ, found in Burkholderia multivorans (strain ATCC 17616 / 249).